A 397-amino-acid chain; its full sequence is Tryptophan synthase beta chain (397 aa).

Position 91 is an N6-(pyridoxal phosphate)lysine (lysine 91).

It belongs to the TrpB family. As to quaternary structure, tetramer of two alpha and two beta chains. Pyridoxal 5'-phosphate serves as cofactor.

It carries out the reaction (1S,2R)-1-C-(indol-3-yl)glycerol 3-phosphate + L-serine = D-glyceraldehyde 3-phosphate + L-tryptophan + H2O. It participates in amino-acid biosynthesis; L-tryptophan biosynthesis; L-tryptophan from chorismate: step 5/5. In terms of biological role, the beta subunit is responsible for the synthesis of L-tryptophan from indole and L-serine. This chain is Tryptophan synthase beta chain, found in Bacillus cereus (strain G9842).